A 392-amino-acid chain; its full sequence is Chaperone protein DnaJ (392 aa).

The region spanning 2–67 is the J domain; the sequence is DYYDVLGVSK…QKRESYDRYG (66 aa). Residues 149–227 form a CR-type zinc finger; it reads GVEKELLVSG…CRGQGRIKDK (79 aa). Positions 162, 165, 179, 182, 201, 204, 215, and 218 each coordinate Zn(2+). 4 CXXCXGXG motif repeats span residues 162 to 169, 179 to 186, 201 to 208, and 215 to 222; these read CETCLGSG, CDRCKGSG, CPECGGEG, and CSNCRGQG.

Belongs to the DnaJ family. In terms of assembly, homodimer. The cofactor is Zn(2+).

The protein localises to the cytoplasm. Functionally, participates actively in the response to hyperosmotic and heat shock by preventing the aggregation of stress-denatured proteins and by disaggregating proteins, also in an autonomous, DnaK-independent fashion. Unfolded proteins bind initially to DnaJ; upon interaction with the DnaJ-bound protein, DnaK hydrolyzes its bound ATP, resulting in the formation of a stable complex. GrpE releases ADP from DnaK; ATP binding to DnaK triggers the release of the substrate protein, thus completing the reaction cycle. Several rounds of ATP-dependent interactions between DnaJ, DnaK and GrpE are required for fully efficient folding. Also involved, together with DnaK and GrpE, in the DNA replication of plasmids through activation of initiation proteins. In Chlamydia caviae (strain ATCC VR-813 / DSM 19441 / 03DC25 / GPIC) (Chlamydophila caviae), this protein is Chaperone protein DnaJ.